Consider the following 81-residue polypeptide: Photosystem I iron-sulfur center (81 aa).

2 4Fe-4S ferredoxin-type domains span residues 2 to 31 and 39 to 68; these read SHSV…MIPW and IASA…VRVY. [4Fe-4S] cluster contacts are provided by C11, C14, C17, C21, C48, C51, C54, and C58.

In terms of assembly, the eukaryotic PSI reaction center is composed of at least 11 subunits. It depends on [4Fe-4S] cluster as a cofactor.

Its subcellular location is the plastid. The protein localises to the chloroplast thylakoid membrane. The catalysed reaction is reduced [plastocyanin] + hnu + oxidized [2Fe-2S]-[ferredoxin] = oxidized [plastocyanin] + reduced [2Fe-2S]-[ferredoxin]. Apoprotein for the two 4Fe-4S centers FA and FB of photosystem I (PSI); essential for photochemical activity. FB is the terminal electron acceptor of PSI, donating electrons to ferredoxin. The C-terminus interacts with PsaA/B/D and helps assemble the protein into the PSI complex. Required for binding of PsaD and PsaE to PSI. PSI is a plastocyanin-ferredoxin oxidoreductase, converting photonic excitation into a charge separation, which transfers an electron from the donor P700 chlorophyll pair to the spectroscopically characterized acceptors A0, A1, FX, FA and FB in turn. This chain is Photosystem I iron-sulfur center, found in Vitis vinifera (Grape).